A 181-amino-acid chain; its full sequence is Shikimate kinase 2 (181 aa).

Position 12–17 (12–17) interacts with ATP; the sequence is GCGKTT. Residues Thr16 and Asp32 each contribute to the Mg(2+) site. Substrate is bound by residues Asp34, Arg58, and Gly79. Positions 112 to 126 are LID domain; sequence EAEPEADLRPTLTGK. Residue Arg120 coordinates ATP. Substrate is bound at residue Arg139.

Belongs to the shikimate kinase family. AroL subfamily. As to quaternary structure, monomer. Mg(2+) serves as cofactor.

The protein localises to the cytoplasm. It carries out the reaction shikimate + ATP = 3-phosphoshikimate + ADP + H(+). Its pathway is metabolic intermediate biosynthesis; chorismate biosynthesis; chorismate from D-erythrose 4-phosphate and phosphoenolpyruvate: step 5/7. In terms of biological role, catalyzes the specific phosphorylation of the 3-hydroxyl group of shikimic acid using ATP as a cosubstrate. This is Shikimate kinase 2 from Salmonella enteritidis PT4 (strain P125109).